The primary structure comprises 216 residues: Probable phosphatase SPAC513.02 (216 aa).

The Tele-phosphohistidine intermediate role is filled by His-15.

This sequence belongs to the phosphoglycerate mutase family. BPG-dependent PGAM subfamily.

The protein localises to the cytoplasm. It is found in the nucleus. This is Probable phosphatase SPAC513.02 from Schizosaccharomyces pombe (strain 972 / ATCC 24843) (Fission yeast).